The primary structure comprises 86 residues: MVLQNDIDLLNPPAELEKRKHKLKRLVQSPNSFFMDVKCQGCFNITTVFSHSQTVVVCGNCQTILCQPTGGKAKLTEGCSFRRKGD.

The C4-type zinc finger occupies 39-61 (CQGCFNITTVFSHSQTVVVCGNC).

This sequence belongs to the eukaryotic ribosomal protein eS27 family. It depends on Zn(2+) as a cofactor.

Its function is as follows. May be involved in the elimination of damaged mRNA after UV irradiation. In Arabidopsis thaliana (Mouse-ear cress), this protein is Small ribosomal subunit protein eS27y (RPS27B).